The sequence spans 190 residues: Transcription termination/antitermination protein NusG (190 aa).

Residues 138 to 166 form the KOW domain; sequence VGEIVTVTEGPFETFTGTVEEVDQEKARL.

Belongs to the NusG family.

In terms of biological role, participates in transcription elongation, termination and antitermination. The chain is Transcription termination/antitermination protein NusG from Rickettsia bellii (strain RML369-C).